Here is a 1017-residue protein sequence, read N- to C-terminus: MGKKSRAVPGRRPILQLSPPGPRGSTPGRDPEPEPDTEPDSTAAVPSQPAPSAATTTTTAVTAAAASDDSPSEDEQEAVQEVPRVVQNPPKPVMTTRPTAVKATGGLCLLGAYADSDDDDNDVSEKLAQSKETNGNQSTDIDSTLANFLAEIDAITAPQPAAPVGASAPPPTPPRPEPKEAATSTLSSSTSNGTDSTQTSGWQYDTQCSLAGVGIEMGDWQEVWDENTGCYYYWNTQTNEVTWELPQYLATQVQGLQHYQPSSVPGAETSFVVNTDIYSKEKTISVSSSKSGPVIAKREVKKEVNEGIQALSNSEEEKKGVAASLLAPLLPEGIKEEEERWRRKVICKEEPVSEVKETSTTVEEATTIVKPQEIMLDNIEDPSQEDLCSVVQSGESEEEEEQDTLELELVLERKKAELRALEEGDGSVSGSSPRSDISQPASQDGMRRLMSKRGKWKMFVRATSPESTSRSSSKTGRDTPENGETAIGAENSEKIDENSDKEMEVEESPEKIKVQTTPKVEEEQDLKFQIGELANTLTSKFEFLGINRQSISNFHVLLLQTETRIADWREGALNGNYLKRKLQDAAEQLKQYEINATPKGWSCHWDRDHRRYFYVNEQSGESQWEFPDGEEEEEESQAQENRDETLAKQTLKDKTGTDSNSTESSETSTGSLCKESFSGQVSSSSLMPLTPFWTLLQSNVPVLQPPLPLEMPPPPPPPPESPPPPPPPPPPAEDGEIQEVEMEDEGSEEPPAPGTEEDTPLKPSAQTTVVTSQSSVDSTISSSSSTKGIKRKATEISTAVVQRSATIGSSPVLYSQSAIATGHQAAGIGNQATGIGHQTIPVSLPAAGMGHQARGMSLQSNYLGLAAAPAIMSYAECSVPIGVTAPSLQPVQARGAVPTATIIEPPPPPPPPPPPPPPAPKMPPPEKTKKGRKDKAKKSKTKMPSLVKKWQSIQRELDEEDNSSSSEEDRESTAQKRIEEWKQQQLVSGMAERNANFEALPEDWRARLKRRKMAPNT.

Disordered stretches follow at residues M1–I141 and P160–W202. Residue S18 is modified to Phosphoserine. Residues D40–D69 are compositionally biased toward low complexity. 2 positions are modified to phosphoserine: S116 and S124. Residues S130–I141 show a composition bias toward polar residues. T172 carries the phosphothreonine modification. Residues A181–S200 are compositionally biased toward low complexity. The 35-residue stretch at G214–Y248 folds into the WW 1 domain. K290 carries the N6-acetyllysine modification. K301 participates in a covalent cross-link: Glycyl lysine isopeptide (Lys-Gly) (interchain with G-Cter in SUMO1). Residue K335 forms a Glycyl lysine isopeptide (Lys-Gly) (interchain with G-Cter in SUMO2) linkage. A Glycyl lysine isopeptide (Lys-Gly) (interchain with G-Cter in SUMO1); alternate cross-link involves residue K348. Residue K348 forms a Glycyl lysine isopeptide (Lys-Gly) (interchain with G-Cter in SUMO2); alternate linkage. Disordered stretches follow at residues L421–K519, E621–S676, P706–K792, and T899–N994. A phosphoserine mark is found at S427, S432, S435, S438, and S442. Residues V428–S442 show a composition bias toward polar residues. The segment covering L449–M458 has biased composition (basic residues). Over residues R461–K474 the composition is skewed to low complexity. At S464 the chain carries Phosphoserine. The residue at position 479 (T479) is a Phosphothreonine. Basic and acidic residues predominate over residues N491–K513. Phosphoserine is present on residues S499 and S508. Residues T516 and T517 each carry the phosphothreonine modification. K519 is covalently cross-linked (Glycyl lysine isopeptide (Lys-Gly) (interchain with G-Cter in SUMO1); alternate). A Glycyl lysine isopeptide (Lys-Gly) (interchain with G-Cter in SUMO2); alternate cross-link involves residue K519. The WW 2 domain maps to N595–G629. The segment covering P627–Q637 has biased composition (acidic residues). Basic and acidic residues predominate over residues E640 to G656. Positions T657 to S671 are enriched in low complexity. Residues P706 to A732 show a composition bias toward pro residues. The span at E733–E748 shows a compositional bias: acidic residues. Residues S764–T786 show a composition bias toward low complexity. The span at E904–P925 shows a compositional bias: pro residues. A compositionally biased stretch (basic residues) spans K929 to T941. Over residues L957–R970 the composition is skewed to acidic residues. A phosphoserine mark is found at S963, S964, and S965. The segment covering E971 to K982 has biased composition (basic and acidic residues).

As to quaternary structure, binds FMN1. Interacts with the Arg/Gly-rich-flanked Pro-rich of KHDRBS1/SAM68. Arginine methylation in these regions has no effect on this binding. In terms of tissue distribution, highly expressed in the eye.

In Homo sapiens (Human), this protein is Formin-binding protein 4 (FNBP4).